Reading from the N-terminus, the 169-residue chain is 6,7-dimethyl-8-ribityllumazine synthase (169 aa).

5-amino-6-(D-ribitylamino)uracil contacts are provided by residues F24, 58–60, and 82–84; these read ALE and AVI. 87–88 contacts (2S)-2-hydroxy-3-oxobutyl phosphate; sequence ET. H90 (proton donor) is an active-site residue. N115 lines the 5-amino-6-(D-ribitylamino)uracil pocket. R129 contributes to the (2S)-2-hydroxy-3-oxobutyl phosphate binding site.

This sequence belongs to the DMRL synthase family.

The catalysed reaction is (2S)-2-hydroxy-3-oxobutyl phosphate + 5-amino-6-(D-ribitylamino)uracil = 6,7-dimethyl-8-(1-D-ribityl)lumazine + phosphate + 2 H2O + H(+). The protein operates within cofactor biosynthesis; riboflavin biosynthesis; riboflavin from 2-hydroxy-3-oxobutyl phosphate and 5-amino-6-(D-ribitylamino)uracil: step 1/2. Its function is as follows. Catalyzes the formation of 6,7-dimethyl-8-ribityllumazine by condensation of 5-amino-6-(D-ribitylamino)uracil with 3,4-dihydroxy-2-butanone 4-phosphate. This is the penultimate step in the biosynthesis of riboflavin. This chain is 6,7-dimethyl-8-ribityllumazine synthase, found in Burkholderia vietnamiensis (strain G4 / LMG 22486) (Burkholderia cepacia (strain R1808)).